We begin with the raw amino-acid sequence, 276 residues long: UPF0761 membrane protein APL_1950 (276 aa).

The next 7 helical transmembrane spans lie at 33–53, 90–110, 125–145, 147–167, 171–191, 203–223, and 239–259; these read TLAI…FPIF, MGIV…QSID, IFIS…LAGG, IAIS…LLSF, LLQY…YWLV, LGAI…VWYI, and LPIM…GGLI.

This sequence belongs to the UPF0761 family.

Its subcellular location is the cell inner membrane. The chain is UPF0761 membrane protein APL_1950 from Actinobacillus pleuropneumoniae serotype 5b (strain L20).